Here is a 94-residue protein sequence, read N- to C-terminus: Pyrimidine/purine nucleoside phosphorylase (94 aa).

Belongs to the nucleoside phosphorylase PpnP family.

It catalyses the reaction a purine D-ribonucleoside + phosphate = a purine nucleobase + alpha-D-ribose 1-phosphate. The catalysed reaction is adenosine + phosphate = alpha-D-ribose 1-phosphate + adenine. It carries out the reaction cytidine + phosphate = cytosine + alpha-D-ribose 1-phosphate. The enzyme catalyses guanosine + phosphate = alpha-D-ribose 1-phosphate + guanine. It catalyses the reaction inosine + phosphate = alpha-D-ribose 1-phosphate + hypoxanthine. The catalysed reaction is thymidine + phosphate = 2-deoxy-alpha-D-ribose 1-phosphate + thymine. It carries out the reaction uridine + phosphate = alpha-D-ribose 1-phosphate + uracil. The enzyme catalyses xanthosine + phosphate = alpha-D-ribose 1-phosphate + xanthine. Its function is as follows. Catalyzes the phosphorolysis of diverse nucleosides, yielding D-ribose 1-phosphate and the respective free bases. Can use uridine, adenosine, guanosine, cytidine, thymidine, inosine and xanthosine as substrates. Also catalyzes the reverse reactions. This chain is Pyrimidine/purine nucleoside phosphorylase, found in Citrobacter koseri (strain ATCC BAA-895 / CDC 4225-83 / SGSC4696).